The following is a 306-amino-acid chain: tRNA dimethylallyltransferase (306 aa).

Position 12 to 19 (12 to 19 (GPTASGKT)) interacts with ATP. 14–19 (TASGKT) serves as a coordination point for substrate. 3 interaction with substrate tRNA regions span residues 37–40 (DSAL), 161–165 (QRLSR), and 242–247 (RCVGYR).

It belongs to the IPP transferase family. As to quaternary structure, monomer. The cofactor is Mg(2+).

The catalysed reaction is adenosine(37) in tRNA + dimethylallyl diphosphate = N(6)-dimethylallyladenosine(37) in tRNA + diphosphate. Its function is as follows. Catalyzes the transfer of a dimethylallyl group onto the adenine at position 37 in tRNAs that read codons beginning with uridine, leading to the formation of N6-(dimethylallyl)adenosine (i(6)A). This Shewanella amazonensis (strain ATCC BAA-1098 / SB2B) protein is tRNA dimethylallyltransferase.